The sequence spans 491 residues: Ran-binding protein 3 (491 aa).

Positions Met1–Pro10 are enriched in basic and acidic residues. Disordered stretches follow at residues Met1–Glu177 and Val255–Ser292. An N-acetylalanine modification is found at Ala2. An N6-acetyllysine mark is found at Lys9 and Lys21. Residues Ser32, Ser33, and Ser40 each carry the phosphoserine modification. The Nuclear localization signal signature appears at Pro49–Ser57. The segment covering Val51–Ser67 has biased composition (basic and acidic residues). Thr56 bears the Phosphothreonine mark. Ser58 is modified (phosphoserine). 2 stretches are compositionally biased toward polar residues: residues Val111–Val124 and Pro133–Glu149. Ser146 is modified (phosphoserine). A compositionally biased stretch (basic and acidic residues) spans Glu152–Pro162. Phosphoserine is present on residues Ser257, Ser277, Ser279, and Ser296. Low complexity predominate over residues Ala275–Ala286. A RanBD1 domain is found at Lys302–Glu442. The tract at residues Arg438–Thr491 is disordered. Ser463 carries the post-translational modification Phosphoserine.

Interacts with CHC1 in a Ran-stimulated manner. Interacts with XPO1. Interacts (via its C-terminal R domain) with SMAD2 (dephosphorylated form via its MH1 and MH2 domains); the interaction results in the nuclear export of SMAD2 and termination of the TGF-beta signaling. Interacts (via its C-terminal R domain) with SMAD3 (dephosphorylated form via its MH1 domain); the interaction results in the nuclear export of SMAD3 and termination of the TGF-beta signaling. In terms of processing, phosphorylation at Ser-58 promotes its import into the nucleus.

The protein localises to the cytoplasm. It is found in the nucleus. Acts as a cofactor for XPO1/CRM1-mediated nuclear export, perhaps as export complex scaffolding protein. Bound to XPO1/CRM1, stabilizes the XPO1/CRM1-cargo interaction. In the absence of Ran-bound GTP prevents binding of XPO1/CRM1 to the nuclear pore complex. Binds to CHC1/RCC1 and increases the guanine nucleotide exchange activity of CHC1/RCC1. Recruits XPO1/CRM1 to CHC1/RCC1 in a Ran-dependent manner. Negative regulator of TGF-beta signaling through interaction with the R-SMAD proteins, SMAD2 and SMAD3, and mediating their nuclear export. The sequence is that of Ran-binding protein 3 (Ranbp3) from Mus musculus (Mouse).